A 950-amino-acid polypeptide reads, in one-letter code: MSTTSLQHFSHSYSPFPSSRSSNRMAQSQTSGLDTLAEGSQYALEQLQMSREAAGDGEATNSMGKPKDQYQIDNDNHHNNHSLPSFKNSSQRDPLVEARSTIRKNSASAPVRRRISRACDQCNQLRTKCDGQNPCAHCIEFGLTCEYARERKKRGKASKKDLAAAAAAATNPGQPNGSSGKEDAAMVGGHTSPDRRPTLNGRYDPAFEVPRNLNGSAQHSEASGMVGMQNSQHLPPHSQSSMGGGLEGLSLNGYNGLNDSSRPSMPVPELQSLHMLHNSHTNPRSPSSVLPHHRYNGGYNDSAYSLMNPQEPNSTSISHFRLGSSTENPPNSFLGLSPPAQSPGWLPLPSPSPANFPSFSMASFSTTLRYPVLHPVLPHIASIIPQSLACDLLDVYFTSSSSSHLSPQSPYVVGYIFRKQSFLHPTKPRVCTPGLLASMLWVAAQTSDAPFLTSPPSARGRVCQKLLELTIGLLRPLIHGPAPGETSPNYAANMVINGVALGGFGVSMDQLGAQSSATGAVDDVATYVHLATVISASEYKAASMRWWTAAWSLARELKLGRELPPNTPHSRPDAERDGDPDADLSKRHPPPLITSMGHGPGNTVINITEEEREERRRLWWLLYATDRHLALCYNRPLTLLDKECEGLLQPMNDDLWQAGDFATYRQAGPPVECTGHSMFGYFLPLMTILGEIVDLQQARNHPRFGLAFRNSAECEAQVLEIARQLDVYAQSLKEFETRYTSSLALGAAETEAAMEGSHLNHVSPSGRSSSTVESRVNESIVHTKMVVAYGTHIMHVLHILLAGKWDPINLLDDNDLWISSESFVAAMGHAVGAAEAASEILEYDPDLSFMPFFFGIYLLQGSFLLLLTADKLQGDASPSVVRACETIVRAHEACVVTLNTEYQRTFRKVMRSALAQVRGRLPEDFGEQQQRRREVLALYRWTGDGSGLAL.

The disordered stretch occupies residues M1–E97. Positions H8 to S22 are enriched in low complexity. Positions N23–L33 are enriched in polar residues. Positions K65–H78 are enriched in basic and acidic residues. Positions H81 to R92 are enriched in polar residues. The zn(2)-C6 fungal-type DNA-binding region spans C119–C145. Disordered regions lie at residues A163–E247, N300–P329, and R561–T603. Polar residues predominate over residues S302 to P329. Residues S570–K586 show a composition bias toward basic and acidic residues.

Belongs to the xlnR/xlr1 family.

Its subcellular location is the nucleus. Transcriptional activator of the xylanolytic system. Involved in the regulation of extracellular cellulolytic and xylanolytic genes and in the regulation of the intracellular activities of D-xylose catabolic genes in the pentose catabolic pathway (PCP) in response to the presence of D-xylose. This is Xylanolytic transcriptional activator xlnR (xlnR) from Neosartorya fischeri (strain ATCC 1020 / DSM 3700 / CBS 544.65 / FGSC A1164 / JCM 1740 / NRRL 181 / WB 181) (Aspergillus fischerianus).